The following is a 229-amino-acid chain: Potassium/proton antiporter CemA (229 aa).

The next 3 membrane-spanning stretches (helical) occupy residues 7-27 (LTPL…SLSF), 106-126 (IILH…FFIM), and 189-209 (IISG…KYWI).

It belongs to the CemA family.

Its subcellular location is the plastid. It localises to the chloroplast inner membrane. The enzyme catalyses K(+)(in) + H(+)(out) = K(+)(out) + H(+)(in). In terms of biological role, contributes to K(+)/H(+) antiport activity by supporting proton efflux to control proton extrusion and homeostasis in chloroplasts in a light-dependent manner to modulate photosynthesis. Prevents excessive induction of non-photochemical quenching (NPQ) under continuous-light conditions. Indirectly promotes efficient inorganic carbon uptake into chloroplasts. The protein is Potassium/proton antiporter CemA of Ceratophyllum demersum (Rigid hornwort).